A 267-amino-acid chain; its full sequence is Small ribosomal subunit protein uS2 (267 aa).

Residues 233-250 (RAESDKAETDKVEVEGKG) show a composition bias toward basic and acidic residues. A disordered region spans residues 233 to 267 (RAESDKAETDKVEVEGKGEAPAAEAAEVVESADKA). Residues 251-261 (EAPAAEAAEVV) show a composition bias toward low complexity.

This sequence belongs to the universal ribosomal protein uS2 family.

In Syntrophotalea carbinolica (strain DSM 2380 / NBRC 103641 / GraBd1) (Pelobacter carbinolicus), this protein is Small ribosomal subunit protein uS2.